The following is a 180-amino-acid chain: DNA-directed RNA polymerase subunit Rpo7 (180 aa).

In terms of domain architecture, S1 motif spans Gln82–Arg165.

Belongs to the eukaryotic RPB7/RPC8 RNA polymerase subunit family. In terms of assembly, part of the 13-subunit RNA polymerase complex. Forms a stalk with Rpo4 that extends from the main structure.

The protein resides in the cytoplasm. It carries out the reaction RNA(n) + a ribonucleoside 5'-triphosphate = RNA(n+1) + diphosphate. Functionally, DNA-dependent RNA polymerase (RNAP) catalyzes the transcription of DNA into RNA using the four ribonucleoside triphosphates as substrates. The polypeptide is DNA-directed RNA polymerase subunit Rpo7 (Saccharolobus solfataricus (strain ATCC 35092 / DSM 1617 / JCM 11322 / P2) (Sulfolobus solfataricus)).